Here is a 287-residue protein sequence, read N- to C-terminus: AA9 family lytic polysaccharide monooxygenase D (287 aa).

An N-terminal signal peptide occupies residues 1-17; the sequence is MKLSLLAAAAIAPMVSA. Cu(2+) is bound at residue His18. A disulfide bridge connects residues Cys67 and Cys189. Position 176 (His176) interacts with O2. Tyr186 is a binding site for Cu(2+). Asn220 and Asn250 each carry an N-linked (GlcNAc...) asparagine glycan. The disordered stretch occupies residues 239 to 287; sequence TGGSGSSTGSYNESNAEDSNEYPYQKESGTCQSNFYRREHARDFSHRRA. Residues 274-287 show a composition bias toward basic and acidic residues; sequence YRREHARDFSHRRA.

It belongs to the polysaccharide monooxygenase AA9 family. It depends on Cu(2+) as a cofactor.

The protein resides in the secreted. The catalysed reaction is [(1-&gt;4)-beta-D-glucosyl]n+m + reduced acceptor + O2 = 4-dehydro-beta-D-glucosyl-[(1-&gt;4)-beta-D-glucosyl]n-1 + [(1-&gt;4)-beta-D-glucosyl]m + acceptor + H2O.. Functionally, lytic polysaccharide monooxygenase (LPMO) that depolymerizes crystalline and amorphous polysaccharides via the oxidation of scissile alpha- or beta-(1-4)-glycosidic bonds, yielding C1 oxidation products. Catalysis by LPMOs requires the reduction of the active-site copper from Cu(II) to Cu(I) by a reducing agent and H(2)O(2) or O(2) as a cosubstrate. Active on celluloseas as well as on the hemicellulose xyloglucan. Shows synergy with other hydrolases in degrading sorghum stover. The polypeptide is AA9 family lytic polysaccharide monooxygenase D (Emericella nidulans (strain FGSC A4 / ATCC 38163 / CBS 112.46 / NRRL 194 / M139) (Aspergillus nidulans)).